An 814-amino-acid polypeptide reads, in one-letter code: Cellulase/esterase CelE (814 aa).

The signal sequence occupies residues 1-34 (MKKIVSLVCVLVMLVSILGSFSVVAASPVKGFQV). Residues 35-354 (SGTKLLDASG…AVFWWDNGYY (320 aa)) are cellulase. E193 serves as the catalytic Proton donor; for cellulase activity. E316 serves as the catalytic Nucleophile; for cellulase activity. In terms of domain architecture, Dockerin spans 409 to 479 (ANILYGDVNG…LLRSIDKFPA (71 aa)). Positions 415, 417, 419, 420, 421, 426, 451, 452, 453, 455, 457, and 462 each coordinate Ca(2+). The esterase stretch occupies residues 490 to 814 (PGILYNGRFD…TAEIKNKLGW (325 aa)). The active-site Nucleophile; for esterase activity is the S612.

This sequence in the N-terminal section; belongs to the glycosyl hydrolase 5 (cellulase A) family. The protein in the C-terminal section; belongs to the carbohydrate esterase 2 (CE2) family.

Its subcellular location is the secreted. It catalyses the reaction Endohydrolysis of (1-&gt;4)-beta-D-glucosidic linkages in cellulose, lichenin and cereal beta-D-glucans.. The catalysed reaction is Deacetylation of xylans and xylo-oligosaccharides.. Its pathway is glycan metabolism; cellulose degradation. It functions in the pathway glycan degradation; xylan degradation. Its activity is regulated as follows. Esterase activity of the CE2 module is inhibited when this domain binds to cellohexaose or beta-glucan. In terms of biological role, multifunctional enzyme involved in the degradation of plant cell wall polysaccharides. Displays endoglucanase activity against carboxymethyl cellulose (CMC) and barley beta-glucan. Also catalyzes the deacetylation of acetylated birchwood xylan and glucomannan, with a preference for the latter, and of the synthetic substrate 4-nitrophenyl acetate (4-NPAc). The protein is Cellulase/esterase CelE of Acetivibrio thermocellus (strain ATCC 27405 / DSM 1237 / JCM 9322 / NBRC 103400 / NCIMB 10682 / NRRL B-4536 / VPI 7372) (Clostridium thermocellum).